Consider the following 200-residue polypeptide: uncharacterized protein (200 aa).

Residues 104–124 (SNLLICFLFLCGLYHISVFTG) traverse the membrane as a helical segment.

Its subcellular location is the membrane. This is an uncharacterized protein from Escherichia coli (strain K12).